A 374-amino-acid polypeptide reads, in one-letter code: Alcohol dehydrogenase class-3 (374 aa).

A2 is modified (N-acetylalanine). Residues C45, H67, C97, C100, C103, C111, and C174 each contribute to the Zn(2+) site. K233 carries the post-translational modification N6-succinyllysine. At S247 the chain carries Phosphoserine. K315 is modified (N6-succinyllysine). S324 carries the phosphoserine modification.

It belongs to the zinc-containing alcohol dehydrogenase family. Class-III subfamily. As to quaternary structure, homodimer. Requires Zn(2+) as cofactor.

It localises to the cytoplasm. It carries out the reaction a primary alcohol + NAD(+) = an aldehyde + NADH + H(+). The enzyme catalyses a secondary alcohol + NAD(+) = a ketone + NADH + H(+). It catalyses the reaction S-(hydroxymethyl)glutathione + NADP(+) = S-formylglutathione + NADPH + H(+). The catalysed reaction is S-(hydroxymethyl)glutathione + NAD(+) = S-formylglutathione + NADH + H(+). It carries out the reaction 20-oxo-(5Z,8Z,11Z,14Z)-eicosatetraenoate + NAD(+) + H2O = (5Z,8Z,11Z,14Z)-eicosatetraenedioate + NADH + 2 H(+). The enzyme catalyses 20-hydroxy-(5Z,8Z,11Z,14Z)-eicosatetraenoate + NAD(+) = 20-oxo-(5Z,8Z,11Z,14Z)-eicosatetraenoate + NADH + H(+). It catalyses the reaction S-nitrosoglutathione + NADH + H(+) = S-(hydroxysulfenamide)glutathione + NAD(+). Catalyzes the oxidation of long-chain primary alcohols and the oxidation of S-(hydroxymethyl) glutathione. Also oxidizes long chain omega-hydroxy fatty acids, such as 20-HETE, producing both the intermediate aldehyde, 20-oxoarachidonate and the end product, a dicarboxylic acid, (5Z,8Z,11Z,14Z)-eicosatetraenedioate. Class-III ADH is remarkably ineffective in oxidizing ethanol. Required for clearance of cellular formaldehyde, a cytotoxic and carcinogenic metabolite that induces DNA damage. Also acts as a S-nitroso-glutathione reductase by catalyzing the NADH-dependent reduction of S-nitrosoglutathione, thereby regulating protein S-nitrosylation. This chain is Alcohol dehydrogenase class-3, found in Bos taurus (Bovine).